The chain runs to 276 residues: Diaminopimelate epimerase (276 aa).

Positions 13, 46, and 66 each coordinate substrate. Catalysis depends on Cys-75, which acts as the Proton donor. Substrate contacts are provided by residues 76–77, Asn-159, Asn-192, and 210–211; these read GN and ER. Cys-219 (proton acceptor) is an active-site residue. 220 to 221 serves as a coordination point for substrate; it reads GT.

This sequence belongs to the diaminopimelate epimerase family. In terms of assembly, homodimer.

The protein resides in the cytoplasm. The enzyme catalyses (2S,6S)-2,6-diaminopimelate = meso-2,6-diaminopimelate. It participates in amino-acid biosynthesis; L-lysine biosynthesis via DAP pathway; DL-2,6-diaminopimelate from LL-2,6-diaminopimelate: step 1/1. Its function is as follows. Catalyzes the stereoinversion of LL-2,6-diaminopimelate (L,L-DAP) to meso-diaminopimelate (meso-DAP), a precursor of L-lysine and an essential component of the bacterial peptidoglycan. In Aeromonas hydrophila subsp. hydrophila (strain ATCC 7966 / DSM 30187 / BCRC 13018 / CCUG 14551 / JCM 1027 / KCTC 2358 / NCIMB 9240 / NCTC 8049), this protein is Diaminopimelate epimerase.